The primary structure comprises 253 residues: Imidazole glycerol phosphate synthase subunit HisF (253 aa).

Active-site residues include Asp-11 and Asp-130.

Belongs to the HisA/HisF family. As to quaternary structure, heterodimer of HisH and HisF.

Its subcellular location is the cytoplasm. It carries out the reaction 5-[(5-phospho-1-deoxy-D-ribulos-1-ylimino)methylamino]-1-(5-phospho-beta-D-ribosyl)imidazole-4-carboxamide + L-glutamine = D-erythro-1-(imidazol-4-yl)glycerol 3-phosphate + 5-amino-1-(5-phospho-beta-D-ribosyl)imidazole-4-carboxamide + L-glutamate + H(+). The protein operates within amino-acid biosynthesis; L-histidine biosynthesis; L-histidine from 5-phospho-alpha-D-ribose 1-diphosphate: step 5/9. Its function is as follows. IGPS catalyzes the conversion of PRFAR and glutamine to IGP, AICAR and glutamate. The HisF subunit catalyzes the cyclization activity that produces IGP and AICAR from PRFAR using the ammonia provided by the HisH subunit. This is Imidazole glycerol phosphate synthase subunit HisF from Dehalococcoides mccartyi (strain CBDB1).